We begin with the raw amino-acid sequence, 166 residues long: PTS system glucose-specific EIIA component (166 aa).

In terms of domain architecture, PTS EIIA type-1 spans 34-138 (DPVFAQKMMG…SVISPIIITN (105 aa)). His71 and His86 together coordinate Zn(2+). Catalysis depends on His86, which acts as the Tele-phosphohistidine intermediate; for EIIA activity. The residue at position 86 (His86) is a Phosphohistidine; by HPr.

As to quaternary structure, heterodimer with glycerol kinase (glpk). Zn(2+) serves as cofactor.

The protein resides in the cytoplasm. The phosphoenolpyruvate-dependent sugar phosphotransferase system (sugar PTS), a major carbohydrate active transport system, catalyzes the phosphorylation of incoming sugar substrates concomitantly with their translocation across the cell membrane. The enzyme II complex composed of PtsG and Crr is involved in glucose transport. The sequence is that of PTS system glucose-specific EIIA component (crr) from Staphylococcus aureus (strain COL).